Consider the following 181-residue polypeptide: Ribulose bisphosphate carboxylase small subunit, chloroplastic (181 aa).

The N-terminal 54 residues, 1-54 (MASSMLSSAAVVTSQLQATMVAPFTGLKSSAAFPVTRKTNTDITSIASNGGRVS), are a transit peptide targeting the chloroplast.

Belongs to the RuBisCO small chain family. In terms of assembly, heterohexadecamer of 8 large and 8 small subunits.

It localises to the plastid. The protein localises to the chloroplast. RuBisCO catalyzes two reactions: the carboxylation of D-ribulose 1,5-bisphosphate, the primary event in carbon dioxide fixation, as well as the oxidative fragmentation of the pentose substrate. Both reactions occur simultaneously and in competition at the same active site. Although the small subunit is not catalytic it is essential for maximal activity. This chain is Ribulose bisphosphate carboxylase small subunit, chloroplastic, found in Raphanus sativus (Radish).